Consider the following 568-residue polypeptide: Peroxisomal leader peptide-processing protease (568 aa).

Residues T332 to L568 are serine protease. Active-site charge relay system residues include H374, D410, and S483.

This sequence belongs to the peptidase S1B family. As to quaternary structure, homodimer. Forms a heterodimer with the C-terminal cleavage product (49 kDa form). Forms a heterodimer with the N-terminal cleavage product (10 kDa form). Interacts with PEX5. Interacts with LONP2. In terms of processing, self-cleavage gives rise to an N-terminal 10-kDa fragment and C-terminal 49-kDa fragment upon import into the peroxisomes. The full-lengh TYSND1 is the active the proteolytic processing of PTS1- and PTS2-proteins and in self-cleavage, and intermolecular self-cleavage of TYSND1 down-regulates its protease activity.

The protein localises to the peroxisome. Its activity is regulated as follows. Inhibited by N-ethylmaleimide (NEM). Not affected by leupeptin or trans-epoxysuccinyl-l-leucylamido-(4-gianidino) butane (E64). Functionally, peroxisomal protease that mediates both the removal of the leader peptide from proteins containing a PTS2 target sequence and processes several PTS1-containing proteins. Catalyzes the processing of PTS1-proteins involved in the peroxisomal beta-oxidation of fatty acids. This chain is Peroxisomal leader peptide-processing protease (Tysnd1), found in Mus musculus (Mouse).